A 422-amino-acid chain; its full sequence is Probable ornithine aminotransferase, mitochondrial (422 aa).

At Lys273 the chain carries N6-(pyridoxal phosphate)lysine.

This sequence belongs to the class-III pyridoxal-phosphate-dependent aminotransferase family. Pyridoxal 5'-phosphate is required as a cofactor.

The protein resides in the mitochondrion matrix. The catalysed reaction is a 2-oxocarboxylate + L-ornithine = L-glutamate 5-semialdehyde + an L-alpha-amino acid. Its pathway is amino-acid biosynthesis; L-proline biosynthesis; L-glutamate 5-semialdehyde from L-ornithine: step 1/1. In Caenorhabditis elegans, this protein is Probable ornithine aminotransferase, mitochondrial.